Consider the following 747-residue polypeptide: Polyribonucleotide nucleotidyltransferase (747 aa).

2 residues coordinate Mg(2+): D487 and D493. The region spanning 554 to 613 is the KH domain; it reads PSTTTIKIDKDKIRDVIGPGGKVIKEICETSDAKIDISDDGTVSVYASDRDKLKVALDKI. The 69-residue stretch at 623 to 691 folds into the S1 motif domain; sequence GEIFNGTVMK…NKGKAKLTIK (69 aa). The disordered stretch occupies residues 691 to 747; that stretch reads KNADKDKSSNNPKQKNNVNNSKENSEPERRDSSKKRAWNEDNNSDTTEVITERKYFN. Residues 699 to 712 are compositionally biased toward low complexity; the sequence is SNNPKQKNNVNNSK. Residues 730–739 are compositionally biased toward polar residues; the sequence is EDNNSDTTEV.

The protein belongs to the polyribonucleotide nucleotidyltransferase family. The cofactor is Mg(2+).

The protein resides in the cytoplasm. It catalyses the reaction RNA(n+1) + phosphate = RNA(n) + a ribonucleoside 5'-diphosphate. Involved in mRNA degradation. Catalyzes the phosphorolysis of single-stranded polyribonucleotides processively in the 3'- to 5'-direction. This is Polyribonucleotide nucleotidyltransferase from Rickettsia akari (strain Hartford).